The sequence spans 494 residues: DBIRD complex subunit ZNF326 (494 aa).

3 disordered regions span residues 1 to 22 (MDREYGSYNQRSVNSYGNQSFS), 147 to 170 (AFGGRSNDAFGGPSKGRGRGRGQM), and 202 to 264 (KMAP…NSEK). The span at 7–22 (SYNQRSVNSYGNQSFS) shows a compositional bias: polar residues. The short motif at 200 to 221 (KRKMAPPFKPVGFFGKKQKLSK) is the Bipartite nuclear localization signal element. C2H2 AKAP95-type zinc fingers lie at residues 273-295 (CSFCKFRSFDEKGIEEHLTSATH) and 365-388 (CSACSVYVPALHSSVQLHLKSADH). The interval 429 to 494 (PFETQPDEQQ…CDPLTTTDEV (66 aa)) is disordered. The span at 433-451 (QPDEQQQEQEEEEEEEEQQ) shows a compositional bias: acidic residues.

Belongs to the AKAP95 family. As to quaternary structure, component of the DBIRD complex.

It is found in the nucleus. In terms of biological role, core component of the DBIRD complex, a multiprotein complex that acts at the interface between core mRNP particles and RNA polymerase II (RNAPII) and integrates transcript elongation with the regulation of alternative splicing. In Xenopus laevis (African clawed frog), this protein is DBIRD complex subunit ZNF326 (znf326).